Here is a 1394-residue protein sequence, read N- to C-terminus: DNA-directed RNA polymerase subunit beta' (1394 aa).

Residues Cys70, Cys72, Cys85, and Cys88 each coordinate Zn(2+). Mg(2+) is bound by residues Asp470, Asp472, and Asp474. Residues Cys815, Cys889, Cys896, and Cys899 each contribute to the Zn(2+) site.

The protein belongs to the RNA polymerase beta' chain family. In terms of assembly, the RNAP catalytic core consists of 2 alpha, 1 beta, 1 beta' and 1 omega subunit. When a sigma factor is associated with the core the holoenzyme is formed, which can initiate transcription. Mg(2+) is required as a cofactor. It depends on Zn(2+) as a cofactor.

It carries out the reaction RNA(n) + a ribonucleoside 5'-triphosphate = RNA(n+1) + diphosphate. Functionally, DNA-dependent RNA polymerase catalyzes the transcription of DNA into RNA using the four ribonucleoside triphosphates as substrates. The chain is DNA-directed RNA polymerase subunit beta' from Anaeromyxobacter sp. (strain K).